A 500-amino-acid polypeptide reads, in one-letter code: MATIAFSRLSIYFCVLLLCHGSMAQLFGPNVNPWHNPRQGGFRECRFDRLQAFEPLRRVRSEAGVTEYFDEKNEQFQCTGTFVIRRVIEPQGLLVPRYSNTPGMVYIIQGRGSMGLTFPGCPATYQQQFQQFLPEGQSQSQKFRDEHQKIHQFRQGDIVALPAGVAHWFYNEGDAPVVALYVFDLNNNANQLEPRQKEFLLAGNNNREQQMYGRSIEQHSGQNIFSGFNNELLSEALGVNALVAKRLQGQNDQRGEIIRVKNGLKLLRPAFAQQQEQAQQQEQAQAQYQVQYSEEQQPSTRCNGLDENFCTIKARLNIENPSHADTYNPRAGRITRLNSQKFPILNLVQLSATRVNLYQNAILSPFWNVNAHSLVYIVQGHARVQVVSNLGKTVFNGVLRPGQLLIIPQHYVVLKKAEHEGCQYISFKTNANSMVSHLAGKNSIFRAMPVDVIANAYRISREQARSLKNNRGEELGAFTPRYQQQTYLGFSNESENEASE.

The signal sequence occupies residues 1–24 (MATIAFSRLSIYFCVLLLCHGSMA). 2 cysteine pairs are disulfide-bonded: Cys-45–Cys-78 and Cys-121–Cys-310. Cupin type-1 domains follow at residues 50 to 245 (LQAF…LVAK) and 316 to 465 (LNIE…EQAR).

This sequence belongs to the 11S seed storage protein (globulins) family. As to quaternary structure, hexamer; each subunit is composed of an acidic and a basic chain derived from a single precursor and linked by a disulfide bond.

Functionally, seed storage protein. This Oryza sativa subsp. japonica (Rice) protein is Glutelin type-B 5 (GLUB5).